The following is a 357-amino-acid chain: MHNQYGSLFSITTWGESHGPSIGVVIDGCPAGLPLAPEDFLPAMKRRRPGQLHTSPRQETDSVTILSGVYQQKTTGTPISLLIQNEDASSTSYEQLNDCYRPGHAQFAYEGKYGFADNRGGGRSSARETAARVAAGVVAKKILSSQGIKTLAFLSGFGPLENKTYPKLTDPLIRKVYSSPFYTILSQEEIQNLLLHDPEDSFGGIVSFITSPLPIGLGEPVFGKLPALLAAGMMSIPATKGFEIGEGFASAHMTGSTYLDSFIAKEGEISFQTNRCGGTLGGISIGQPLEGRVAFKPTSSIRKPCPSVSKDGEPITYKTPKQGRHDPCVAIRAVTVVEAMLDLTLVDLLLQHRCAKL.

Residue Arg47 coordinates NADP(+). Residues 123-125, Gly281, 296-300, and Arg324 each bind FMN; these read RSS and KPTSS.

The protein belongs to the chorismate synthase family. As to quaternary structure, homotetramer. The cofactor is FMNH2.

It catalyses the reaction 5-O-(1-carboxyvinyl)-3-phosphoshikimate = chorismate + phosphate. The protein operates within metabolic intermediate biosynthesis; chorismate biosynthesis; chorismate from D-erythrose 4-phosphate and phosphoenolpyruvate: step 7/7. In terms of biological role, catalyzes the anti-1,4-elimination of the C-3 phosphate and the C-6 proR hydrogen from 5-enolpyruvylshikimate-3-phosphate (EPSP) to yield chorismate, which is the branch point compound that serves as the starting substrate for the three terminal pathways of aromatic amino acid biosynthesis. This reaction introduces a second double bond into the aromatic ring system. In Chlamydia muridarum (strain MoPn / Nigg), this protein is Chorismate synthase.